The sequence spans 103 residues: Large ribosomal subunit protein bL21 (103 aa).

This sequence belongs to the bacterial ribosomal protein bL21 family. Part of the 50S ribosomal subunit. Contacts protein L20.

This protein binds to 23S rRNA in the presence of protein L20. The protein is Large ribosomal subunit protein bL21 of Methylibium petroleiphilum (strain ATCC BAA-1232 / LMG 22953 / PM1).